Consider the following 908-residue polypeptide: ATP-dependent DNA helicase DDX31 (908 aa).

The interval 55-165 (KNENNLNNNK…EESNAIESNS (111 aa)) is disordered. The span at 56–122 (NENNLNNNKN…NSNNNNLNKK (67 aa)) shows a compositional bias: low complexity. Residues 124 to 144 (TFLEKKIQQEQKQKELKELKG) show a composition bias toward basic and acidic residues. A Q motif motif is present at residues 207-236 (MNWGSLQLSETLVRNLVGHMKHEKPTHIQE). Residues 239–422 (ITPILKGNDA…SLSLTSPVYI (184 aa)) enclose the Helicase ATP-binding domain. 252 to 259 (AQTGSGKT) serves as a coordination point for ATP. Positions 363-366 (DEAD) match the DEAD box motif. Positions 518-738 (DKERGVKRTK…QLESQVHDLQ (221 aa)) constitute a Helicase C-terminal domain. Residues 519 to 537 (KERGVKRTKKEQIKQDKLI) are compositionally biased toward basic and acidic residues. 2 disordered regions span residues 519–590 (KERG…KEAT) and 872–908 (RNER…FKSK). Residues 553–580 (ESDDEESDNDDSDDSDSNNSDSETDEEK) are compositionally biased toward acidic residues. Basic and acidic residues-rich tracts occupy residues 872–889 (RNER…EIKE) and 896–908 (DKKI…FKSK).

This sequence belongs to the DEAD box helicase family. DDX31/DBP7 subfamily.

It localises to the nucleus. It is found in the nucleolus. The enzyme catalyses ATP + H2O = ADP + phosphate + H(+). Its function is as follows. May have DNA helicase activity and RNA helicase activity. Probably have ssDNA and RNA dependent ATPase activity. This chain is ATP-dependent DNA helicase DDX31 (ddx31), found in Dictyostelium discoideum (Social amoeba).